The following is a 276-amino-acid chain: S-adenosylmethionine-dependent nucleotide dehydratase (276 aa).

The Radical SAM core domain occupies 6–216 (TSVRKFRSAN…RRRHEDIGCI (211 aa)). Residues Cys22, Cys26, and Cys29 each coordinate [4Fe-4S] cluster.

This sequence belongs to the radical SAM superfamily. Viperin family. [4Fe-4S] cluster serves as cofactor.

It catalyses the reaction CTP + AH2 + S-adenosyl-L-methionine = 3'-deoxy-3',4'-didehydro-CTP + 5'-deoxyadenosine + L-methionine + A + H2O + H(+). Functionally, expression of pVip50 in E.coli (strain MG1655) confers resistance to phage P1; has no effect against T7. Catalyzes the conversion of cytosine triphosphate (CTP) to 3'-deoxy-3',4'-didehydro-CTP (ddhCTP), probably via a SAM-dependent radical mechanism. The modified nucleotide represses transcription from T7 RNA polymerase-directed genes (possibly by acting as chain terminators), strongly suggesting these nucleotides block viral polymerase transcription. How this protein allows bacteria to resist viruses that do not encode their own RNA polymerase (such as lambda, P1) is unknown. This Thermoplasmatales archaeon (strain ISO4-H5) protein is S-adenosylmethionine-dependent nucleotide dehydratase.